Reading from the N-terminus, the 287-residue chain is N-methyltransferase verN (287 aa).

It belongs to the methyltransferase superfamily. LaeA methyltransferase family.

Its pathway is mycotoxin biosynthesis. Functionally, N-methyltransferase; part of the gene cluster that mediates the biosynthesis of 11'-deoxyverticillin A, one of the dimeric epipolythiodioxopiperazines (ETPs) from the verticillin family that act as mycotoxins. 11'-deoxyverticillin A is required for normal conidiation. The nonribosomal peptide synthetase verP is speculated to be responsible for condensation of amino acids to form the carbon skeleton of verticillin, whereas the cluster-specific tailoring enzymes are involved in further modifications leading to the production of 11'-deoxyverticillin A. This chain is N-methyltransferase verN, found in Clonostachys rogersoniana.